The primary structure comprises 45 residues: Large ribosomal subunit protein bL34 (45 aa).

This sequence belongs to the bacterial ribosomal protein bL34 family.

The chain is Large ribosomal subunit protein bL34 from Clavibacter michiganensis subsp. michiganensis (strain NCPPB 382).